Consider the following 338-residue polypeptide: Ketol-acid reductoisomerase (NADP(+)) (338 aa).

Residues 1–181 (MKVFYDKDAD…GGGRAGIIET (181 aa)) enclose the KARI N-terminal Rossmann domain. NADP(+) contacts are provided by residues 24-27 (YGSQ), R47, and S52. Residue H107 is part of the active site. G133 provides a ligand contact to NADP(+). The region spanning 182–327 (NFREETETDL…EKLRAMMPWI (146 aa)) is the KARI C-terminal knotted domain. Mg(2+)-binding residues include D190, E194, E226, and E230. Residue S251 coordinates substrate.

This sequence belongs to the ketol-acid reductoisomerase family. Requires Mg(2+) as cofactor.

It catalyses the reaction (2R)-2,3-dihydroxy-3-methylbutanoate + NADP(+) = (2S)-2-acetolactate + NADPH + H(+). The enzyme catalyses (2R,3R)-2,3-dihydroxy-3-methylpentanoate + NADP(+) = (S)-2-ethyl-2-hydroxy-3-oxobutanoate + NADPH + H(+). It functions in the pathway amino-acid biosynthesis; L-isoleucine biosynthesis; L-isoleucine from 2-oxobutanoate: step 2/4. Its pathway is amino-acid biosynthesis; L-valine biosynthesis; L-valine from pyruvate: step 2/4. In terms of biological role, involved in the biosynthesis of branched-chain amino acids (BCAA). Catalyzes an alkyl-migration followed by a ketol-acid reduction of (S)-2-acetolactate (S2AL) to yield (R)-2,3-dihydroxy-isovalerate. In the isomerase reaction, S2AL is rearranged via a Mg-dependent methyl migration to produce 3-hydroxy-3-methyl-2-ketobutyrate (HMKB). In the reductase reaction, this 2-ketoacid undergoes a metal-dependent reduction by NADPH to yield (R)-2,3-dihydroxy-isovalerate. In Cupriavidus taiwanensis (strain DSM 17343 / BCRC 17206 / CCUG 44338 / CIP 107171 / LMG 19424 / R1) (Ralstonia taiwanensis (strain LMG 19424)), this protein is Ketol-acid reductoisomerase (NADP(+)).